We begin with the raw amino-acid sequence, 89 residues long: Small ribosomal subunit protein uS19 (89 aa).

The protein belongs to the universal ribosomal protein uS19 family.

In terms of biological role, protein S19 forms a complex with S13 that binds strongly to the 16S ribosomal RNA. The polypeptide is Small ribosomal subunit protein uS19 (Parabacteroides distasonis (strain ATCC 8503 / DSM 20701 / CIP 104284 / JCM 5825 / NCTC 11152)).